The following is a 170-amino-acid chain: Ecotin (170 aa).

The first 21 residues, 1 to 21 (MNKASVVFSGLLMAVSASAIA), serve as a signal peptide directing secretion. Cysteine 78 and cysteine 115 are oxidised to a cystine.

Belongs to the protease inhibitor I11 (ecotin) family. In terms of assembly, homodimer.

It is found in the periplasm. General inhibitor of pancreatic serine proteases: inhibits chymotrypsin, trypsin, elastases, factor X, kallikrein as well as a variety of other proteases. The sequence is that of Ecotin from Serratia proteamaculans (strain 568).